The sequence spans 147 residues: Hemoglobin subunit delta (147 aa).

One can recognise a Globin domain in the interval 3 to 147 (HLTADETALV…VANALAHKYH (145 aa)). S51 bears the Phosphoserine mark. Positions 64 and 93 each coordinate heme b.

Belongs to the globin family. As to quaternary structure, heterotetramer of two delta chains and two alpha chains. Red blood cells.

This chain is Hemoglobin subunit delta (HBD), found in Dugong dugon (Dugong).